The chain runs to 131 residues: Protein ApaG (131 aa).

Positions 3–127 (RAVTRQIEVT…FSLDSPDGGK (125 aa)) constitute an ApaG domain.

This is Protein ApaG from Bradyrhizobium sp. (strain BTAi1 / ATCC BAA-1182).